The sequence spans 773 residues: ATP-dependent zinc metalloprotease YME1L1 (773 aa).

Over 1 to 295 the chain is Mitochondrial matrix; sequence MFSLSSTVQP…TNDSLRRTRL (295 aa). The chain crosses the membrane as a helical span at residues 296–316; that stretch reads ILFVLLLFGIYGLLKNPFLSV. Over 317-773 the chain is Mitochondrial intermembrane; that stretch reads RFRTTTGLDS…VLEGKKLEVR (457 aa). The ATP site is built by Val-341, Thr-383, Gly-384, Lys-385, Thr-386, and Leu-387. His-599 contributes to the Zn(2+) binding site. Residue Glu-600 is part of the active site. Zn(2+) contacts are provided by His-603 and Asp-677.

This sequence in the N-terminal section; belongs to the AAA ATPase family. The protein in the C-terminal section; belongs to the peptidase M41 family. Homohexamer; may also form heterohexamers. Exists in several complexes of 600-1100 kDa. Interacts with AFG1L. It depends on Zn(2+) as a cofactor. In terms of processing, proteolytically processed by mitochondrial processing peptidase (MPP) to generate the mature form. Degraded in an OMA1-dependent manner in response to oxidative stress. As to expression, high expression in cardiac and skeletal muscle mitochondria.

It is found in the mitochondrion inner membrane. The protein localises to the mitochondrion. The enzyme catalyses ATP + H2O = ADP + phosphate + H(+). ATP-dependent metalloprotease that catalyzes the degradation of folded and unfolded proteins with a suitable degron sequence in the mitochondrial intermembrane region. Plays an important role in regulating mitochondrial morphology and function by cleaving OPA1 at position S2, giving rise to a form of OPA1 that promotes maintenance of normal mitochondrial structure and mitochondrial protein metabolism. Ensures cell proliferation, maintains normal cristae morphology and complex I respiration activity, promotes antiapoptotic activity and protects mitochondria from the accumulation of oxidatively damaged membrane proteins. Required to control the accumulation of nonassembled respiratory chain subunits (NDUFB6, OX4 and ND1). Involved in the mitochondrial adaptation in response to various signals, such as stress or developmental cues, by mediating degradation of mitochondrial proteins to rewire the mitochondrial proteome. Catalyzes degradation of mitochondrial proteins, such as translocases, lipid transfer proteins and metabolic enzymes in response to nutrient starvation in order to limit mitochondrial biogenesis: mechanistically, YME1L is activated by decreased phosphatidylethanolamine levels caused by LPIN1 activity in response to mTORC1 inhibition. Acts as a regulator of adult neural stem cell self-renewal by promoting mitochondrial proteome rewiring, preserving neural stem and progenitor cells self-renewal. Required for normal, constitutive degradation of PRELID1. Catalyzes the degradation of OMA1 in response to membrane depolarization. Mediates degradation of TIMM17A downstream of the integrated stress response (ISR). Catalyzes degradation of MICU1 when MICU1 is not assembled via an interchain disulfide. The sequence is that of ATP-dependent zinc metalloprotease YME1L1 (YME1L1) from Homo sapiens (Human).